A 499-amino-acid polypeptide reads, in one-letter code: Bestrophin homolog 22 (499 aa).

The next 4 helical transmembrane spans lie at 29–49, 77–97, 235–255, and 267–287; these read WKAV…ISCI, IPLT…WGSI, LVYP…CLIG, and GIDL…MGWM. Basic and acidic residues predominate over residues 417–432; the sequence is HNAKHAKQRGLERANS. Disordered regions lie at residues 417–455 and 474–499; these read HNAK…ANGS and TSNP…TSRH.

Belongs to the anion channel-forming bestrophin (TC 1.A.46) family. Calcium-sensitive chloride channel subfamily. Forms oligomers.

The protein resides in the cell membrane. Forms chloride channels. This Caenorhabditis elegans protein is Bestrophin homolog 22 (best-22).